We begin with the raw amino-acid sequence, 291 residues long: 4-hydroxy-tetrahydrodipicolinate synthase (291 aa).

Threonine 47 serves as a coordination point for pyruvate. The active-site Proton donor/acceptor is tyrosine 134. Lysine 162 serves as the catalytic Schiff-base intermediate with substrate. Pyruvate is bound at residue isoleucine 205.

Belongs to the DapA family. In terms of assembly, homotetramer; dimer of dimers.

It localises to the cytoplasm. It carries out the reaction L-aspartate 4-semialdehyde + pyruvate = (2S,4S)-4-hydroxy-2,3,4,5-tetrahydrodipicolinate + H2O + H(+). It participates in amino-acid biosynthesis; L-lysine biosynthesis via DAP pathway; (S)-tetrahydrodipicolinate from L-aspartate: step 3/4. Its function is as follows. Catalyzes the condensation of (S)-aspartate-beta-semialdehyde [(S)-ASA] and pyruvate to 4-hydroxy-tetrahydrodipicolinate (HTPA). This chain is 4-hydroxy-tetrahydrodipicolinate synthase, found in Methanospirillum hungatei JF-1 (strain ATCC 27890 / DSM 864 / NBRC 100397 / JF-1).